A 382-amino-acid chain; its full sequence is F-box/kelch-repeat protein At3g16580 (382 aa).

The F-box domain maps to 9–55 (WEFSLSLPWELIEEILSRVPPESLLRFKTVSKQWNALFRDKTFINNH). Kelch repeat units follow at residues 150-196 (KIFA…NIYT) and 334-381 (WIYV…AELQ).

The sequence is that of F-box/kelch-repeat protein At3g16580 from Arabidopsis thaliana (Mouse-ear cress).